The following is a 121-amino-acid chain: Conopressin-conophysin (121 aa).

Residues 1 to 20 (MGRLTMALCWLLLLLLTTQA) form the signal peptide. Cys-21 and Cys-26 are oxidised to a cystine. Pro-27 carries the 4-hydroxyproline; partial; in Conopressin-ba1c modification. A Glycine amide modification is found at Gly-29. 7 disulfide bridges follow: Cys-43–Cys-83, Cys-46–Cys-57, Cys-51–Cys-73, Cys-58–Cys-63, Cys-90–Cys-108, Cys-102–Cys-120, and Cys-109–Cys-114.

The protein belongs to the vasopressin/oxytocin family. As to expression, expressed by the venom duct.

It is found in the secreted. This chain is Conopressin-conophysin, found in Conus bayani (Bayan's cone).